The following is a 215-amino-acid chain: MADKSDLNALSGRFRGYYPVVIDVETAGFNAQTDALLEIAAVTLQMNKDGWLLPDETLHFHVDPFEGANLEPEALAFNGIDPTNPLRGAVSEHDALHAIFKAVRKGLKEQGCNRAIIVAHNAHFDHSFVMAAAERASLKRNPFHPFATFDTAALSGLVLGQTVLAKACLTAGIPFDSSQAHSALYDTMQTAKLFCELVNRWKKLGGWPVPAGESE.

The Exonuclease domain occupies Val20–Phe194. Residues Asp23, Glu25, His181, and Asp186 each coordinate Mg(2+). His181 (proton donor/acceptor) is an active-site residue.

The protein belongs to the RNase T family. Homodimer. Mg(2+) is required as a cofactor.

In terms of biological role, trims short 3' overhangs of a variety of RNA species, leaving a one or two nucleotide 3' overhang. Responsible for the end-turnover of tRNA: specifically removes the terminal AMP residue from uncharged tRNA (tRNA-C-C-A). Also appears to be involved in tRNA biosynthesis. The protein is Ribonuclease T of Yersinia enterocolitica serotype O:8 / biotype 1B (strain NCTC 13174 / 8081).